A 367-amino-acid chain; its full sequence is Ferrochelatase (367 aa).

Fe cation is bound by residues histidine 226 and glutamate 307.

The protein belongs to the ferrochelatase family.

The protein resides in the cytoplasm. It catalyses the reaction heme b + 2 H(+) = protoporphyrin IX + Fe(2+). It participates in porphyrin-containing compound metabolism; protoheme biosynthesis; protoheme from protoporphyrin-IX: step 1/1. Its function is as follows. Catalyzes the ferrous insertion into protoporphyrin IX. This is Ferrochelatase from Burkholderia pseudomallei (strain 668).